Consider the following 259-residue polypeptide: Trans-4-hydroxycyclohexanecarboxylate dehydrogenase (259 aa).

The NAD(+) site is built by Arg-20, Met-22, Asp-41, Asp-73, Val-74, Asn-100, Tyr-164, Lys-168, Val-197, Thr-199, and Thr-202. The active-site Proton acceptor is the Tyr-164.

Belongs to the short-chain dehydrogenases/reductases (SDR) family. In terms of assembly, homodimer. Homotetramer.

It carries out the reaction trans-4-hydroxycyclohexane-1-carboxylate + NAD(+) = 4-oxocyclohexane-1-carboxylate + NADH + H(+). With respect to regulation, strongly inhibited by N-bromosuccinimide. Not inhibited by sulfhydryl reagents, such as iodoacetic acid, iodoacetamide, N-ethylmaleimide and p-hydroxymercuribenzoic acid. Functionally, dehydrogenase involved in a cyclohexanecarboxylate (CHCA) degradation pathway. Catalyzes the NAD(+)-dependent dehydrogenation of trans-4-hydroxycyclohexanecarboxylate (trans-4-hydroxyCHCA) to form 4-oxocyclohexanecarboxylate (4-oxoCHCA). Is highly specific for the trans-4-hydroxy derivative and shows only weak activity with cis-4-hydroxyCHCA. Can also catalyze the reverse reaction (4-oxoCHCA reduction) with a higher catalytic efficiency. In the reverse reaction, is highly specific for 4-oxoCHCA and cannot use either the 2-oxo or the 3-oxo homolog as substrate. Cannot use NADP(+). The chain is Trans-4-hydroxycyclohexanecarboxylate dehydrogenase from Sinomonas cyclohexanicum (Corynebacterium cyclohexanicum).